A 165-amino-acid chain; its full sequence is MTLIILEGPDCCFKSTVAAKLSKELKYPIIKGSSFELAKSGNEKLFEHFNKLADEDNVIIDRFVYSNLVYAKKFKDYSILTERQLRFIEDKIKAKAKVVYLHADPSVIKKRLRVRGDEYIEGKDIDSILELYREVMSNAGLHTYSWDTGQWSSDEIAKDIIFLVE.

The protein is SPbeta prophage-derived uncharacterized protein YorR (yorR) of Bacillus subtilis (strain 168).